The primary structure comprises 397 residues: MTYDHIVIRYGEMSTKGKNRLRFVRCLKRNIAKKLKHFPNLQIEASRDRMYIRLHDTPPHPVIEKLQEVFGIQSLSLALKTESDLQKIKEATLFFVKQFPYEGKTFKISARRADKQFPITTNELNYELGSYVLKNTTGLTVDVHHPDIDVRVEVRKEGTYITAYDVPGAGGLPVGTSGKAMLMLSGGIDSPVAGYLAMKRGLQIEAVHFFSPPFTSERAKQKVIDLAQRLTEFGGTIRLHIVPFTELQQAIYKQVPENYSLIAMRRAMLRITDEIRKKENGLAIVTGESLGQVASQTLESMVVVNDVTTTPILRPLVSMDKTEIIAIAERIGTHHISIRPYEDCCTIFTPKAPKTKPKKEKIIQYEKFLPLDEMIAQTVARVETITLKPNEPLDELF.

Positions 60 to 165 (HPVIEKLQEV…KEGTYITAYD (106 aa)) constitute a THUMP domain. Residues 183-184 (ML), 208-209 (HF), Arg-265, Gly-287, and Gln-296 contribute to the ATP site.

This sequence belongs to the ThiI family.

It is found in the cytoplasm. It carries out the reaction [ThiI sulfur-carrier protein]-S-sulfanyl-L-cysteine + a uridine in tRNA + 2 reduced [2Fe-2S]-[ferredoxin] + ATP + H(+) = [ThiI sulfur-carrier protein]-L-cysteine + a 4-thiouridine in tRNA + 2 oxidized [2Fe-2S]-[ferredoxin] + AMP + diphosphate. It catalyses the reaction [ThiS sulfur-carrier protein]-C-terminal Gly-Gly-AMP + S-sulfanyl-L-cysteinyl-[cysteine desulfurase] + AH2 = [ThiS sulfur-carrier protein]-C-terminal-Gly-aminoethanethioate + L-cysteinyl-[cysteine desulfurase] + A + AMP + 2 H(+). Its pathway is cofactor biosynthesis; thiamine diphosphate biosynthesis. In terms of biological role, catalyzes the ATP-dependent transfer of a sulfur to tRNA to produce 4-thiouridine in position 8 of tRNAs, which functions as a near-UV photosensor. Also catalyzes the transfer of sulfur to the sulfur carrier protein ThiS, forming ThiS-thiocarboxylate. This is a step in the synthesis of thiazole, in the thiamine biosynthesis pathway. The sulfur is donated as persulfide by IscS. The chain is Probable tRNA sulfurtransferase from Anoxybacillus flavithermus (strain DSM 21510 / WK1).